The following is a 463-amino-acid chain: Aurantioclavine synthase cnsA (463 aa).

Residues 16–199 (ERFNQRGNVF…TQATVRVFPD (184 aa)) form the FAD-binding PCMH-type domain.

This sequence belongs to the oxygen-dependent FAD-linked oxidoreductase family. It depends on FAD as a cofactor.

It functions in the pathway alkaloid biosynthesis. Its function is as follows. FAD-linked oxidoreductase; part of the gene cluster that mediates the biosynthesis of communesins, a prominent class of indole alkaloids with great potential as pharmaceuticals. Communesins are biosynthesized by the coupling of tryptamine and aurantioclavine, two building blocks derived from L-tryptophan. The L-tryptophan decarboxylase cnsB converts L-tryptophan to tryptamine, whereas the tryptophan dimethylallyltransferase cnsF converts L-tryptophan to 4-dimethylallyl tryptophan which is further transformed to aurantioclavine by the aurantioclavine synthase cnsA, probably aided by the catalase cnsD. The cytochrome P450 monooxygenase cnsC catalyzes the heterodimeric coupling between the two different indole moieties, tryptamine and aurantioclavine, to construct vicinal quaternary stereocenters and yield the heptacyclic communesin scaffold. The O-methyltransferase cnsE then methylates the communesin scaffold to produce communesin K, the simplest characterized communesin that contains the heptacyclic core. The dioxygenase cnsJ converts communesin K into communesin I. Acylation to introduce the hexadienyl group at position N16 of communesin I by the acyltransferase cnsK leads to the production of communesin B. The hexadienyl group is produced by the highly reducing polyketide synthase cnsI, before being hydrolytically removed from cnsI by the serine hydrolase cnsH, converted into hexadienyl-CoA by the CoA ligase cnsG, and then transferred to communesin I by cnsK. Surprisingly, cnsK may also be a promiscuous acyltransferase that can tolerate a range of acyl groups, including acetyl-, propionyl-, and butyryl-CoA, which lead to communesins A, G and H respectively. The roles of the alpha-ketoglutarate-dependent dioxygenases cnsM and cnsP have still to be determined. The sequence is that of Aurantioclavine synthase cnsA from Penicillium expansum (Blue mold rot fungus).